Consider the following 565-residue polypeptide: NAD-dependent malic enzyme (565 aa).

The active-site Proton donor is tyrosine 104. Arginine 157 serves as a coordination point for NAD(+). The active-site Proton acceptor is lysine 175. The a divalent metal cation site is built by glutamate 246, aspartate 247, and aspartate 270. The NAD(+) site is built by aspartate 270 and asparagine 418.

This sequence belongs to the malic enzymes family. In terms of assembly, homotetramer. Mg(2+) serves as cofactor. Mn(2+) is required as a cofactor.

The catalysed reaction is (S)-malate + NAD(+) = pyruvate + CO2 + NADH. It carries out the reaction oxaloacetate + H(+) = pyruvate + CO2. In Salmonella choleraesuis (strain SC-B67), this protein is NAD-dependent malic enzyme.